Consider the following 86-residue polypeptide: uncharacterized protein (86 aa).

This is an uncharacterized protein from Ovis aries (Sheep).